A 252-amino-acid chain; its full sequence is Hydroxyacylglutathione hydrolase (252 aa).

Positions 54, 56, 58, 59, 111, 128, and 166 each coordinate Zn(2+).

This sequence belongs to the metallo-beta-lactamase superfamily. Glyoxalase II family. In terms of assembly, monomer. Zn(2+) serves as cofactor.

The catalysed reaction is an S-(2-hydroxyacyl)glutathione + H2O = a 2-hydroxy carboxylate + glutathione + H(+). It participates in secondary metabolite metabolism; methylglyoxal degradation; (R)-lactate from methylglyoxal: step 2/2. Thiolesterase that catalyzes the hydrolysis of S-D-lactoyl-glutathione to form glutathione and D-lactic acid. The protein is Hydroxyacylglutathione hydrolase of Vibrio vulnificus (strain CMCP6).